The chain runs to 259 residues: Global transcriptional regulator CodY (259 aa).

Residues 1–155 (MALLQKTRKI…GATVVGMEIL (155 aa)) are GAF domain. The H-T-H motif DNA-binding region spans 203-222 (ASKIADRVGITRSVIVNALR). Ser215 bears the Phosphoserine mark.

Belongs to the CodY family.

Its subcellular location is the cytoplasm. DNA-binding global transcriptional regulator which is involved in the adaptive response to starvation and acts by directly or indirectly controlling the expression of numerous genes in response to nutrient availability. During rapid exponential growth, CodY is highly active and represses genes whose products allow adaptation to nutrient depletion. This chain is Global transcriptional regulator CodY, found in Bacillus licheniformis (strain ATCC 14580 / DSM 13 / JCM 2505 / CCUG 7422 / NBRC 12200 / NCIMB 9375 / NCTC 10341 / NRRL NRS-1264 / Gibson 46).